The chain runs to 110 residues: Hydrogenase maturation factor HypA (110 aa).

H2 provides a ligand contact to Ni(2+). The Zn(2+) site is built by C70, C73, C86, and C89.

This sequence belongs to the HypA/HybF family.

In terms of biological role, involved in the maturation of [NiFe] hydrogenases. Required for nickel insertion into the metal center of the hydrogenase. The polypeptide is Hydrogenase maturation factor HypA (Geotalea uraniireducens (strain Rf4) (Geobacter uraniireducens)).